The primary structure comprises 715 residues: Ribosomal RNA large subunit methyltransferase K/L (715 aa).

Residues 43 to 154 (TQYRALLWSR…RDDLVLSLDL (112 aa)) form the THUMP domain.

Belongs to the methyltransferase superfamily. RlmKL family.

It localises to the cytoplasm. It carries out the reaction guanosine(2445) in 23S rRNA + S-adenosyl-L-methionine = N(2)-methylguanosine(2445) in 23S rRNA + S-adenosyl-L-homocysteine + H(+). It catalyses the reaction guanosine(2069) in 23S rRNA + S-adenosyl-L-methionine = N(2)-methylguanosine(2069) in 23S rRNA + S-adenosyl-L-homocysteine + H(+). Its function is as follows. Specifically methylates the guanine in position 2445 (m2G2445) and the guanine in position 2069 (m7G2069) of 23S rRNA. This Mannheimia succiniciproducens (strain KCTC 0769BP / MBEL55E) protein is Ribosomal RNA large subunit methyltransferase K/L.